The chain runs to 45 residues: Photosystem II reaction center protein K (45 aa).

The propeptide occupies 1 to 8; that stretch reads MLMSLFLA. The helical transmembrane segment at 23–43 threads the bilayer; the sequence is ILPIIPLFFLLLAFVWQAAIG.

This sequence belongs to the PsbK family. PSII is composed of 1 copy each of membrane proteins PsbA, PsbB, PsbC, PsbD, PsbE, PsbF, PsbH, PsbI, PsbJ, PsbK, PsbL, PsbM, PsbT, PsbX, PsbY, PsbZ, Psb30/Ycf12, at least 3 peripheral proteins of the oxygen-evolving complex and a large number of cofactors. It forms dimeric complexes.

It localises to the plastid. Its subcellular location is the cyanelle thylakoid membrane. Functionally, one of the components of the core complex of photosystem II (PSII). PSII is a light-driven water:plastoquinone oxidoreductase that uses light energy to abstract electrons from H(2)O, generating O(2) and a proton gradient subsequently used for ATP formation. It consists of a core antenna complex that captures photons, and an electron transfer chain that converts photonic excitation into a charge separation. This is Photosystem II reaction center protein K from Cyanophora paradoxa.